Here is a 200-residue protein sequence, read N- to C-terminus: Phospholipase A2 inhibitor LNF1 (200 aa).

Positions 1 to 19 are cleaved as a signal peptide; it reads MKYLHTICLLFIFVARGNS. Cystine bridges form between Cys-22–Cys-46, Cys-25–Cys-32, Cys-39–Cys-67, Cys-73–Cys-94, Cys-95–Cys-100, Cys-118–Cys-143, Cys-136–Cys-165, and Cys-169–Cys-191. Asn-176 is a glycosylation site (N-linked (GlcNAc...) asparagine).

It belongs to the CNF-like-inhibitor family. In terms of assembly, occurs as a mixture of oligomers. Tetrameric arrangement appears to be the predominant quaternary structure. In terms of tissue distribution, expressed by the liver.

Its subcellular location is the secreted. Inhibits the enzymatic activity of phospholipase A2 (PA2). The protein is Phospholipase A2 inhibitor LNF1 of Lachesis muta muta (Bushmaster).